Consider the following 851-residue polypeptide: Envelope glycoprotein gp160 (851 aa).

The first 32 residues, 1-32 (MRVKEKYQHLWRWGWRWGTMLLGMLMICSATE), serve as a signal peptide directing secretion. Topologically, residues 33–679 (KLWVTVYFGV…ITNWLWYIKL (647 aa)) are extracellular. C54 and C74 are joined by a disulfide. N88, N136, N141, N156, N160, N186, N197, N230, N234, N241, N262, N276, N295, N301, N332, N339, and N356 each carry an N-linked (GlcNAc...) asparagine; by host glycan. 5 cysteine pairs are disulfide-bonded: C119–C205, C126–C196, C131–C157, C218–C247, and C228–C239. Residues 131-156 (CTDLKNDTNTNSSSGRMIMEKGEIKN) form a V1 region. Residues 157–196 (CSFNISTSKRGKVQKEYAFFYKLDIIPIDNDTTSYTLTSC) are V2. The interval 296-330 (CTRPNNNTRKKIRIQRGPGRAFVTIGKIGNMRQAH) is V3. C296 and C331 are joined by a disulfide. Residues 364–374 (SSGGDPEIVTH) form a CD4-binding loop region. Cystine bridges form between C378/C440 and C385/C413. A V4 region spans residues 385-413 (CNSTQLFNSTWSTKGSNNTEGSDTITLPC). Residues N386, N392, N401, N443, and N458 are each glycosylated (N-linked (GlcNAc...) asparagine; by host). V5 stretches follow at residues 456 to 466 (SNNESEIFRPG) and 458 to 466 (NESEIFRPG). The tract at residues 507 to 527 (AVGIGALFLGFLGAAGSTMGA) is fusion peptide. Positions 569-587 (KQLQARILAVERYLKDQQL) are immunosuppression. C593 and C599 form a disulfide bridge. 5 N-linked (GlcNAc...) asparagine; by host glycosylation sites follow: N606, N611, N620, N632, and N669. Positions 628-662 (REINNYTSLIHSLIEESQNQQEKNEQELLELDKWA) form a coiled coil. Residues 657–678 (ELDKWASLWNWFNITNWLWYIK) form an MPER; binding to GalCer region. A helical membrane pass occupies residues 680–700 (FIMIVGGLVGLRIVFAVLSIV). The Cytoplasmic portion of the chain corresponds to 701–851 (NRVRQGYSPL…IRQGLERILL (151 aa)). Residues 707–710 (YSPL) carry the YXXL motif; contains endocytosis signal motif. Residues 713–735 (QTHLPNPRGPDRPEGIEEEGGER) are disordered. C759 carries the S-palmitoyl cysteine; by host lipid modification. The Di-leucine internalization motif signature appears at 850 to 851 (LL).

The protein belongs to the HIV-1 env protein family. In terms of assembly, the mature envelope protein (Env) consists of a homotrimer of non-covalently associated gp120-gp41 heterodimers. The resulting complex protrudes from the virus surface as a spike. There seems to be as few as 10 spikes on the average virion. Interacts with host CD4, CCR5 and CXCR4. Gp120 also interacts with the C-type lectins CD209/DC-SIGN and CLEC4M/DC-SIGNR (collectively referred to as DC-SIGN(R)). Gp120 and gp41 interact with GalCer. Gp120 interacts with host ITGA4/ITGB7 complex; on CD4+ T-cells, this interaction results in rapid activation of integrin ITGAL/LFA-1, which facilitates efficient cell-to-cell spreading of HIV-1. Gp120 interacts with cell-associated heparan sulfate; this interaction increases virus infectivity on permissive cells and may be involved in infection of CD4- cells. The mature envelope protein (Env) consists of a homotrimer of non-covalently associated gp120-gp41 heterodimers. The resulting complex protrudes from the virus surface as a spike. There seems to be as few as 10 spikes on the average virion. Highly glycosylated by host. The high number of glycan on the protein is reffered to as 'glycan shield' because it contributes to hide protein sequence from adaptive immune system. Post-translationally, palmitoylation of the transmembrane protein and of Env polyprotein (prior to its proteolytic cleavage) is essential for their association with host cell membrane lipid rafts. Palmitoylation is therefore required for envelope trafficking to classical lipid rafts, but not for viral replication. In terms of processing, specific enzymatic cleavages in vivo yield mature proteins. Envelope glycoproteins are synthesized as an inactive precursor that is heavily N-glycosylated and processed likely by host cell furin in the Golgi to yield the mature SU and TM proteins. The cleavage site between SU and TM requires the minimal sequence [KR]-X-[KR]-R. About 2 of the 9 disulfide bonds of gp41 are reduced by P4HB/PDI, following binding to CD4 receptor.

The protein resides in the virion membrane. Its subcellular location is the host cell membrane. It localises to the host endosome membrane. In terms of biological role, oligomerizes in the host endoplasmic reticulum into predominantly trimers. In a second time, gp160 transits in the host Golgi, where glycosylation is completed. The precursor is then proteolytically cleaved in the trans-Golgi and thereby activated by cellular furin or furin-like proteases to produce gp120 and gp41. Attaches the virus to the host lymphoid cell by binding to the primary receptor CD4. This interaction induces a structural rearrangement creating a high affinity binding site for a chemokine coreceptor like CXCR4 and/or CCR5. Acts as a ligand for CD209/DC-SIGN and CLEC4M/DC-SIGNR, which are respectively found on dendritic cells (DCs), and on endothelial cells of liver sinusoids and lymph node sinuses. These interactions allow capture of viral particles at mucosal surfaces by these cells and subsequent transmission to permissive cells. HIV subverts the migration properties of dendritic cells to gain access to CD4+ T-cells in lymph nodes. Virus transmission to permissive T-cells occurs either in trans (without DCs infection, through viral capture and transmission), or in cis (following DCs productive infection, through the usual CD4-gp120 interaction), thereby inducing a robust infection. In trans infection, bound virions remain infectious over days and it is proposed that they are not degraded, but protected in non-lysosomal acidic organelles within the DCs close to the cell membrane thus contributing to the viral infectious potential during DCs' migration from the periphery to the lymphoid tissues. On arrival at lymphoid tissues, intact virions recycle back to DCs' cell surface allowing virus transmission to CD4+ T-cells. Its function is as follows. Acts as a class I viral fusion protein. Under the current model, the protein has at least 3 conformational states: pre-fusion native state, pre-hairpin intermediate state, and post-fusion hairpin state. During fusion of viral and target intracellular membranes, the coiled coil regions (heptad repeats) assume a trimer-of-hairpins structure, positioning the fusion peptide in close proximity to the C-terminal region of the ectodomain. The formation of this structure appears to drive apposition and subsequent fusion of viral and target cell membranes. Complete fusion occurs in host cell endosomes and is dynamin-dependent, however some lipid transfer might occur at the plasma membrane. The virus undergoes clathrin-dependent internalization long before endosomal fusion, thus minimizing the surface exposure of conserved viral epitopes during fusion and reducing the efficacy of inhibitors targeting these epitopes. Membranes fusion leads to delivery of the nucleocapsid into the cytoplasm. The polypeptide is Envelope glycoprotein gp160 (Homo sapiens (Human)).